The following is a 573-amino-acid chain: uncharacterized protein (573 aa).

This is an uncharacterized protein from Treponema pallidum (strain Nichols).